The primary structure comprises 186 residues: Large ribosomal subunit protein uL5 (186 aa).

This sequence belongs to the universal ribosomal protein uL5 family. As to quaternary structure, part of the 50S ribosomal subunit; part of the 5S rRNA/L5/L18/L25 subcomplex. Contacts the 5S rRNA and the P site tRNA. Forms a bridge to the 30S subunit in the 70S ribosome.

Functionally, this is one of the proteins that bind and probably mediate the attachment of the 5S RNA into the large ribosomal subunit, where it forms part of the central protuberance. In the 70S ribosome it contacts protein S13 of the 30S subunit (bridge B1b), connecting the 2 subunits; this bridge is implicated in subunit movement. Contacts the P site tRNA; the 5S rRNA and some of its associated proteins might help stabilize positioning of ribosome-bound tRNAs. In Maricaulis maris (strain MCS10) (Caulobacter maris), this protein is Large ribosomal subunit protein uL5.